A 311-amino-acid polypeptide reads, in one-letter code: Malate dehydrogenase (311 aa).

Residues 7-13 (GAAGGIG) and Asp34 contribute to the NAD(+) site. Arg81 and Arg87 together coordinate substrate. Residues Asn94 and 117–119 (ITN) each bind NAD(+). Substrate is bound by residues Asn119 and Arg153. Catalysis depends on His177, which acts as the Proton acceptor. NAD(+) is bound at residue Met227.

It belongs to the LDH/MDH superfamily. MDH type 1 family. As to quaternary structure, homodimer.

The enzyme catalyses (S)-malate + NAD(+) = oxaloacetate + NADH + H(+). Functionally, catalyzes the reversible oxidation of malate to oxaloacetate. The sequence is that of Malate dehydrogenase from Shewanella piezotolerans (strain WP3 / JCM 13877).